Consider the following 519-residue polypeptide: Glucose-1-phosphate adenylyltransferase large subunit 3, chloroplastic/amyloplastic (519 aa).

The transit peptide at 1–74 (MQFSSVFPLE…DAGPDTLHVR (74 aa)) directs the protein to the chloroplast.

This sequence belongs to the bacterial/plant glucose-1-phosphate adenylyltransferase family. Heterotetramer composed of two small and two large subunits. Expressed in stems.

The protein resides in the plastid. It localises to the chloroplast. The enzyme catalyses alpha-D-glucose 1-phosphate + ATP + H(+) = ADP-alpha-D-glucose + diphosphate. It participates in glycan biosynthesis; starch biosynthesis. Its activity is regulated as follows. Activated by 3'phosphoglycerate, inhibited by orthophosphate. Allosteric regulation. Involved in synthesis of starch. Catalyzes the synthesis of ADP-glucose, a molecule that serves as an activated glycosyl donor for alpha-1,4-glucan synthesis. Essential for starch synthesis in leaf chloroplasts. The protein is Glucose-1-phosphate adenylyltransferase large subunit 3, chloroplastic/amyloplastic of Oryza sativa subsp. japonica (Rice).